Here is a 179-residue protein sequence, read N- to C-terminus: Zinc finger HIT domain-containing protein 3 (179 aa).

Zn(2+) contacts are provided by C11, C14, C22, C25, C30, C34, H38, and C49. The HIT-type zinc-finger motif lies at 11-49; it reads CVVCLEKPKYRCPACRVPYCSLPCFRKHKAPPLQQLPVC. Phosphoserine is present on S104.

As to quaternary structure, thyroid receptor interacting proteins (TRIPs) specifically interact with the ligand binding domain of the thyroid receptor (TR). Requires the presence of thyroid hormone for its interaction. Interacts with NUFIP1. Interacts (via HIT-type zinc finger) with the RUVBL1/RUVBL2 complex in the presence of ADP.

The protein resides in the cytoplasm. It is found in the nucleus. The sequence is that of Zinc finger HIT domain-containing protein 3 (ZNHIT3) from Bos taurus (Bovine).